Reading from the N-terminus, the 150-residue chain is Large ribosomal subunit protein bL9 (150 aa).

The protein belongs to the bacterial ribosomal protein bL9 family.

Functionally, binds to the 23S rRNA. This is Large ribosomal subunit protein bL9 from Limosilactobacillus fermentum (strain NBRC 3956 / LMG 18251) (Lactobacillus fermentum).